The chain runs to 337 residues: Tryptophan--tRNA ligase (337 aa).

Residues 12–14 (QPS) and 21–22 (GN) each bind ATP. The 'HIGH' region motif lies at 13-22 (PSADSLHLGN). D138 lines the L-tryptophan pocket. ATP is bound by residues 150 to 152 (GDD), I189, and 198 to 202 (KMSKS). The 'KMSKS' region motif lies at 198-202 (KMSKS).

This sequence belongs to the class-I aminoacyl-tRNA synthetase family. Homodimer.

It is found in the cytoplasm. The enzyme catalyses tRNA(Trp) + L-tryptophan + ATP = L-tryptophyl-tRNA(Trp) + AMP + diphosphate + H(+). Its function is as follows. Catalyzes the attachment of tryptophan to tRNA(Trp). The sequence is that of Tryptophan--tRNA ligase from Leifsonia xyli subsp. xyli (strain CTCB07).